A 385-amino-acid chain; its full sequence is MKFPSFLSLGIAASTTALAALPDQKPIGDTIADVHLGKFLIELAPGDTRWVTEEEKWGLKRDGRKFFDITAEVEQNLFPRAFAKTAVTFPTGLHRTVEVMPLAAQLSKDNMFSHLTTFTSFHTRYYKSETGIQSATWLMKQIQKTISSSPASNARVEKFEHPWGQFSVIATVPGQSNKTVVIGAHQDSINMFLPSILAAPGADDDGSGTVTILEAFRVLLQSEAIAQGNATNTVEFHWYSAEEGGLLGSQAVFSKYKQDNKDIRAMLQQDMTGYSKGTLDAGELESVGVITDFVDEGLTEFIKKVVNGYCDIPFVLTECGYACSDHASASRFGYPSAFVIESKFEHSSQHIHTGQDTIETLDFNHMLQHAKMTLGLAYELAFADI.

A signal peptide spans 1-19; that stretch reads MKFPSFLSLGIAASTTALA. Residues 20–87 constitute a propeptide that is removed on maturation; it reads ALPDQKPIGD…FPRAFAKTAV (68 aa). N177 is a glycosylation site (N-linked (GlcNAc...) asparagine). Zn(2+) contacts are provided by H185 and D204. N229 carries an N-linked (GlcNAc...) asparagine glycan. Residues E243 and D270 each coordinate Zn(2+). C319 and C323 are joined by a disulfide. H352 contacts Zn(2+).

It belongs to the peptidase M28 family. M28E subfamily. In terms of assembly, monomer. The cofactor is Zn(2+).

It localises to the secreted. Extracellular aminopeptidase that allows assimilation of proteinaceous substrates. The polypeptide is Leucine aminopeptidase 1 (LAP1) (Ajellomyces dermatitidis (strain ER-3 / ATCC MYA-2586) (Blastomyces dermatitidis)).